A 512-amino-acid chain; its full sequence is 23S rRNA (uracil(1939)-C(5))-methyltransferase RlmD (512 aa).

The segment covering Met-1–Thr-14 has biased composition (low complexity). Residues Met-1–Ala-45 form a disordered region. Residues Glu-15–Ile-25 are compositionally biased toward polar residues. Residues Ser-28–Leu-42 are compositionally biased toward basic residues. The 73-residue stretch at Arg-41 to Asn-113 folds into the TRAM domain. Residues Cys-127, Cys-133, Cys-136, and Cys-215 each coordinate [4Fe-4S] cluster. Residues Gln-340, Phe-369, Asn-374, Glu-393, Asp-420, and Asp-441 each contribute to the S-adenosyl-L-methionine site. Residue Cys-467 is the Nucleophile of the active site.

Belongs to the class I-like SAM-binding methyltransferase superfamily. RNA M5U methyltransferase family. RlmD subfamily.

It carries out the reaction uridine(1939) in 23S rRNA + S-adenosyl-L-methionine = 5-methyluridine(1939) in 23S rRNA + S-adenosyl-L-homocysteine + H(+). Its function is as follows. Catalyzes the formation of 5-methyl-uridine at position 1939 (m5U1939) in 23S rRNA. The polypeptide is 23S rRNA (uracil(1939)-C(5))-methyltransferase RlmD (Psychrobacter arcticus (strain DSM 17307 / VKM B-2377 / 273-4)).